A 347-amino-acid polypeptide reads, in one-letter code: Neutral protease 2 homolog MGG_10927 (347 aa).

Positions 1–19 (MKYSVGITALLATLAQGAA) are cleaved as a signal peptide. The propeptide occupies 20–176 (VMSKRDIPLD…RSYLAKRTMV (157 aa)). Disulfide bonds link C180–C250 and C257–C275. H299 lines the Zn(2+) pocket. Residue E300 is part of the active site. H303 serves as a coordination point for Zn(2+).

It belongs to the peptidase M35 family. Requires Zn(2+) as cofactor.

The protein localises to the secreted. It carries out the reaction Preferential cleavage of bonds with hydrophobic residues in P1'. Also 3-Asn-|-Gln-4 and 8-Gly-|-Ser-9 bonds in insulin B chain.. Functionally, secreted metalloproteinase that allows assimilation of proteinaceous substrates. Shows high activities on basic nuclear substrates such as histone and protamine. In Pyricularia oryzae (strain 70-15 / ATCC MYA-4617 / FGSC 8958) (Rice blast fungus), this protein is Neutral protease 2 homolog MGG_10927.